Consider the following 888-residue polypeptide: Protein translocase subunit SecA (888 aa).

ATP contacts are provided by residues Q81, 99–103 (GEGKT), and D489.

It belongs to the SecA family.

It localises to the plastid. It is found in the chloroplast stroma. The protein localises to the chloroplast thylakoid membrane. The enzyme catalyses ATP + H2O + cellular proteinSide 1 = ADP + phosphate + cellular proteinSide 2.. In terms of biological role, has a central role in coupling the hydrolysis of ATP to the transfer of proteins across the thylakoid membrane. The protein is Protein translocase subunit SecA of Trieres chinensis (Marine centric diatom).